The following is a 282-amino-acid chain: E3 ubiquitin-protein ligase SIAH1 (282 aa).

Polar residues predominate over residues 1-17 (MSRQTATALPTGTSKCP). Residues 1-22 (MSRQTATALPTGTSKCPPSQRV) form a disordered region. At serine 19 the chain carries Phosphoserine; by ATM and ATR. The segment at 41–76 (CPVCFDYVLPPILQCQSGHLVCSNCRPKLTCCPTCR) adopts an RING-type zinc-finger fold. An SBD region spans residues 90–282 (VANSVLFPCK…LGINVTISMC (193 aa)). Residues 93-153 (SVLFPCKYAS…VMPHLMHQHK (61 aa)) form an SIAH-type zinc finger. Zn(2+) is bound by residues cysteine 98, cysteine 105, histidine 117, cysteine 121, cysteine 128, cysteine 135, histidine 147, and histidine 152.

Belongs to the SINA (Seven in absentia) family. As to quaternary structure, homodimer. Interacts with group 1 glutamate receptors GRM1 and GRM5. Interacts with DAB1, which may inhibit its activity. Interacts with UBE2E2. Interacts with PEG3. Interacts with GAPDH; leading to stabilize SIAH1. Component of some large E3 complex composed of UBE2D1, SIAH1, CACYBP/SIP, SKP1, APC and TBL1X. Interacts with UBE2I. Interacts with alpha-tubulin. Interacts with PEG10, which may inhibit its activity. Interacts with KHDRBS3. Interacts with SNCAIP. Interacts with HIPK2; the interaction is promoted by DAZAP2 and results in SIAH1-mediated ubiquitination and subsequent proteasomal degradation of HIPK2. Interacts with DAZAP2; the interaction is decreased following phosphorylation of DAZAP2 by HIPK2. Interacts with Bassoon/BSN and Piccolo/PLCO; these interactions negatively regulate SIAH1 E3 ligase activity. Interacts with DCC. Interacts with AXIN1; catalyzes AXIN1 ubiquitination and subsequent proteasome-mediated ubiquitin-dependent degradation. Post-translationally, phosphorylated on Ser-19 by ATM and ATR. This phosphorylation disrupts SIAH1 interaction with HIPK2, and subsequent proteasomal degradation of HIPK2. In terms of tissue distribution, widely expressed at a low level. Down-regulated in advanced hepatocellular carcinomas.

The protein localises to the cytoplasm. It is found in the nucleus. The catalysed reaction is S-ubiquitinyl-[E2 ubiquitin-conjugating enzyme]-L-cysteine + [acceptor protein]-L-lysine = [E2 ubiquitin-conjugating enzyme]-L-cysteine + N(6)-ubiquitinyl-[acceptor protein]-L-lysine.. Its pathway is protein modification; protein ubiquitination. Inhibited by interaction with SNCAIP (isoform 2, but not isoform 1). May be inhibited by interaction with PEG10. In terms of biological role, E3 ubiquitin-protein ligase that mediates ubiquitination and subsequent proteasomal degradation of target proteins. E3 ubiquitin ligases accept ubiquitin from an E2 ubiquitin-conjugating enzyme in the form of a thioester and then directly transfers the ubiquitin to targeted substrates. Mediates E3 ubiquitin ligase activity either through direct binding to substrates or by functioning as the essential RING domain subunit of larger E3 complexes. Triggers the ubiquitin-mediated degradation of many substrates, including proteins involved in transcription regulation (ELL2, MYB, POU2AF1, PML and RBBP8), a cell surface receptor (DCC), the cell-surface receptor-type tyrosine kinase FLT3, the cytoplasmic signal transduction molecules (KLF10/TIEG1 and NUMB), an antiapoptotic protein (BAG1), a microtubule motor protein (KIF22), a protein involved in synaptic vesicle function in neurons (SYP), a structural protein (CTNNB1) and SNCAIP. Confers constitutive instability to HIPK2 through proteasomal degradation. It is thereby involved in many cellular processes such as apoptosis, tumor suppression, cell cycle, axon guidance, transcription regulation, spermatogenesis and TNF-alpha signaling. Has some overlapping function with SIAH2. Induces apoptosis in cooperation with PEG3. Upon nitric oxid (NO) generation that follows apoptotic stimulation, interacts with S-nitrosylated GAPDH, mediating the translocation of GAPDH to the nucleus. GAPDH acts as a stabilizer of SIAH1, facilitating the degradation of nuclear proteins. Mediates ubiquitination and degradation of EGLN2 and EGLN3 in response to the unfolded protein response (UPR), leading to their degradation and subsequent stabilization of ATF4. Also part of the Wnt signaling pathway in which it mediates the Wnt-induced ubiquitin-mediated proteasomal degradation of AXIN1. The sequence is that of E3 ubiquitin-protein ligase SIAH1 (SIAH1) from Homo sapiens (Human).